The sequence spans 1391 residues: DNA-directed RNA polymerase subunit beta' (1391 aa).

4 residues coordinate Zn(2+): Cys-72, Cys-74, Cys-87, and Cys-90. Asp-462, Asp-464, and Asp-466 together coordinate Mg(2+). Zn(2+) contacts are provided by Cys-816, Cys-890, Cys-897, and Cys-900.

Belongs to the RNA polymerase beta' chain family. As to quaternary structure, the RNAP catalytic core consists of 2 alpha, 1 beta, 1 beta' and 1 omega subunit. When a sigma factor is associated with the core the holoenzyme is formed, which can initiate transcription. The cofactor is Mg(2+). It depends on Zn(2+) as a cofactor.

It carries out the reaction RNA(n) + a ribonucleoside 5'-triphosphate = RNA(n+1) + diphosphate. Its function is as follows. DNA-dependent RNA polymerase catalyzes the transcription of DNA into RNA using the four ribonucleoside triphosphates as substrates. The sequence is that of DNA-directed RNA polymerase subunit beta' from Neisseria meningitidis serogroup A / serotype 4A (strain DSM 15465 / Z2491).